The primary structure comprises 657 residues: MPIDRRAGSVKRRRIKFRDEAFSIHMTASITSTETQEGPVTSGFWALTLGSIGVVFGDIGTSPLYAFHEAVRGAAHGEPVTRVMVLGVLSLILWALLIVVTAKYVLLLLRADNNGEGGTLSLMALGQRALGRRSWFLLALGVVGASMFIGDSMITPAISVLSAVEGLKLATPALEHYVVPLTVLILVLLFAVQSKGTALVASAFGPVMVVWFTCIAVMGAVHIADDPSVLAAINPYYALQFLLSHGTIGLVTLGAVFLAVTGGEALYADLGHFGRKPIQAAWMFFVLPSLLINYFGQGALVLSDPSAIEHSFYRMVPEHLVLPLVGLATAATVIASQAVITGAYSLVYQAVQLGLLPRFEVRYTSESHAGQIYLPRVNRLLLIGVMLLVLLFHTPSNLASAYGIAVSTTMVADGIMGFVVIWKLWNWRAATAAAVILPFVVVDMSFFSANLLKLLEGAWVPLLFGAAMAGTIWTWRRGSGILIQKTRRIEVPLDDLIRSLEKRPPHIVKGTAVFLTSDPSFVPTALLHNLKHNKVLHEHNVVLTIETAHTPRVDLSERFRMEKISDKFSKVRLRFGFMEQPNVPKALAIARKQGWQFDIMSTSFFVSRRSLKASAQSGMPLWQDHLFIALSRSANDATDYFQIPTGRVVEVGTQVTI.

The next 12 helical transmembrane spans lie at 40 to 60, 88 to 108, 135 to 155, 172 to 192, 198 to 218, 241 to 261, 282 to 302, 320 to 340, 380 to 400, 402 to 422, 432 to 452, and 454 to 474; these read VTSG…GDIG, VLSL…VLLL, WFLL…SMIT, PALE…LFAV, ALVA…IAVM, FLLS…LAVT, WMFF…ALVL, LVLP…QAVI, LLLI…NLAS, YGIA…VVIW, AAAV…ANLL, and LLEG…TIWT.

This sequence belongs to the HAK/KUP transporter (TC 2.A.72) family.

The protein localises to the cell inner membrane. The enzyme catalyses K(+)(in) + H(+)(in) = K(+)(out) + H(+)(out). Transport of potassium into the cell. Likely operates as a K(+):H(+) symporter. The sequence is that of Probable potassium transport system protein Kup 1 from Bradyrhizobium diazoefficiens (strain JCM 10833 / BCRC 13528 / IAM 13628 / NBRC 14792 / USDA 110).